The sequence spans 407 residues: Nuclear hormone receptor family member nhr-134 (407 aa).

The segment at Cys-11–Cys-31 adopts an NR C4-type zinc-finger fold. An NR C4-type; degenerate zinc finger spans residues Arg-47 to Cys-66. Residues Gln-157–Thr-407 form the NR LBD domain.

It belongs to the nuclear hormone receptor family.

It localises to the nucleus. Orphan nuclear receptor. This is Nuclear hormone receptor family member nhr-134 (nhr-134) from Caenorhabditis elegans.